The following is a 158-amino-acid chain: NADH-quinone oxidoreductase subunit B (158 aa).

[4Fe-4S] cluster-binding residues include cysteine 37, cysteine 38, cysteine 102, and cysteine 132.

Belongs to the complex I 20 kDa subunit family. As to quaternary structure, NDH-1 is composed of 14 different subunits. Subunits NuoB, C, D, E, F, and G constitute the peripheral sector of the complex. Requires [4Fe-4S] cluster as cofactor.

The protein resides in the cell inner membrane. It catalyses the reaction a quinone + NADH + 5 H(+)(in) = a quinol + NAD(+) + 4 H(+)(out). Its function is as follows. NDH-1 shuttles electrons from NADH, via FMN and iron-sulfur (Fe-S) centers, to quinones in the respiratory chain. The immediate electron acceptor for the enzyme in this species is believed to be ubiquinone. Couples the redox reaction to proton translocation (for every two electrons transferred, four hydrogen ions are translocated across the cytoplasmic membrane), and thus conserves the redox energy in a proton gradient. The polypeptide is NADH-quinone oxidoreductase subunit B (Acidithiobacillus ferrooxidans (strain ATCC 23270 / DSM 14882 / CIP 104768 / NCIMB 8455) (Ferrobacillus ferrooxidans (strain ATCC 23270))).